A 234-amino-acid polypeptide reads, in one-letter code: MTNIRKTHPLLKIVNHSLIDLPAPSNISAWWNFGSLLGLCLMIQILTGLFLAMHYTSDTATAFSSVTHICRDVNYGWLIRYLHANGASMFFICLYMHVGRGIYYGSYTYLETWNIGIILLFAVMATAFMGYVLPWGQMSFWGATVITNLLSAIPYIGTTLVEWIWGGFSVDKATLTRFFAFHFILPFIIAALVMIHLLFLHETGSNNPSGIPSDSDKIPFHPYYTIKDVLGFLM.

A run of 4 helical transmembrane segments spans residues 33-53 (FGSL…FLAM), 77-98 (WLIR…YMHV), 113-133 (WNIG…GYVL), and 178-198 (FFAF…IHLL). Positions 83 and 97 each coordinate heme b. Heme b contacts are provided by His182 and His196. His201 is an a ubiquinone binding site. A helical membrane pass occupies residues 226-234 (IKDVLGFLM).

Belongs to the cytochrome b family. As to quaternary structure, the cytochrome bc1 complex contains 11 subunits: 3 respiratory subunits (MT-CYB, CYC1 and UQCRFS1), 2 core proteins (UQCRC1 and UQCRC2) and 6 low-molecular weight proteins (UQCRH/QCR6, UQCRB/QCR7, UQCRQ/QCR8, UQCR10/QCR9, UQCR11/QCR10 and a cleavage product of UQCRFS1). This cytochrome bc1 complex then forms a dimer. Requires heme b as cofactor.

It is found in the mitochondrion inner membrane. In terms of biological role, component of the ubiquinol-cytochrome c reductase complex (complex III or cytochrome b-c1 complex) that is part of the mitochondrial respiratory chain. The b-c1 complex mediates electron transfer from ubiquinol to cytochrome c. Contributes to the generation of a proton gradient across the mitochondrial membrane that is then used for ATP synthesis. The polypeptide is Cytochrome b (MT-CYB) (Lepus alleni (Antelope jackrabbit)).